The following is a 146-amino-acid chain: MNTVSVVQFLAVGCAVFVLYGRGVFAAEGVKKAGQHKDAELCLGSDGLGHRLDEFWYNDDMCQRFLCFKDDEGIMYEQIANCPIAIAEGDCTLKPGTKGHYPDCCPAVECPPEDQKKRKFKRKCFLVNILTTLLTKLVKNLKKNQQ.

A signal peptide spans 1-26 (MNTVSVVQFLAVGCAVFVLYGRGVFA).

This sequence belongs to the scoloptoxin-16 family. Contains 4 disulfide bonds. Expressed by the venom gland.

It is found in the secreted. In Ethmostigmus rubripes (Giant centipede), this protein is U-scoloptoxin(16)-Er1a.